Reading from the N-terminus, the 852-residue chain is Zinc finger protein 484 (852 aa).

The KRAB domain maps to 8–78; it reads VSFKDVTVDF…DGEIPSQSRP (71 aa). A Glycyl lysine isopeptide (Lys-Gly) (interchain with G-Cter in SUMO2) cross-link involves residue K156. The C2H2-type 1; degenerate zinc-finger motif lies at 223–245; sequence CECNQCGKPLHHKQALIQQQKIH. The segment at 279-301 adopts a C2H2-type 2; degenerate zinc-finger fold; that stretch reads HECHECEAVFTQKSQLDGSQRVY. Residues 328–350 form a C2H2-type 3; degenerate zinc finger; the sequence is YKCSDYGRAFIQKSDLFRCQRIH. The C2H2-type 4; degenerate zinc-finger motif lies at 356–378; sequence YEYSECEKNLPQNSNLNIHKKIH. 15 C2H2-type zinc fingers span residues 384–406, 412–434, 440–462, 468–490, 496–518, 524–546, 552–574, 580–602, 608–630, 636–658, 664–686, 692–714, 720–742, 748–770, and 776–798; these read FECT…QKIH, YVCT…ERIH, YECS…QRIH, FICS…QKIH, YICT…QKIH, YKCS…QKCH, YECS…QQIH, YRCA…QKIH, YKCS…QQSH, YICN…RRIH, YECS…HRIH, and YICA…QKIH. K816 is covalently cross-linked (Glycyl lysine isopeptide (Lys-Gly) (interchain with G-Cter in SUMO2)).

It belongs to the krueppel C2H2-type zinc-finger protein family.

It is found in the nucleus. Functionally, may be involved in transcriptional regulation. This Homo sapiens (Human) protein is Zinc finger protein 484 (ZNF484).